Reading from the N-terminus, the 132-residue chain is Small ribosomal subunit protein uS8 (132 aa).

This sequence belongs to the universal ribosomal protein uS8 family. In terms of assembly, part of the 30S ribosomal subunit. Contacts proteins S5 and S12.

One of the primary rRNA binding proteins, it binds directly to 16S rRNA central domain where it helps coordinate assembly of the platform of the 30S subunit. In Xanthomonas oryzae pv. oryzae (strain MAFF 311018), this protein is Small ribosomal subunit protein uS8.